The sequence spans 190 residues: Dynein axonemal light chain 1 (190 aa).

At A2 the chain carries N-acetylalanine. 4 LRR repeats span residues L47–L69, K70–D93, L95–M114, and R115–E138. Residue S56 is modified to Phosphoserine.

This sequence belongs to the dynein light chain LC1-type family. In terms of assembly, interacts with ZMYND10 (via C-terminus). Interacts with DNAH5, a outer arm dynein heavy chain. Interacts with tubulin located within the A-tubule of the outer doublets in a ATP-independent manner.

The protein resides in the cytoplasm. It is found in the cytoskeleton. Its subcellular location is the cilium axoneme. Its function is as follows. Part of the multisubunit axonemal ATPase complexes that generate the force for cilia motility and govern beat frequency. Component of the outer arm dynein (ODA). May be involved in a mechanosensory feedback mechanism controlling ODA activity based on external conformational cues by tethering the outer arm dynein heavy chain (DNAH5) to the microtubule within the axoneme. Important for ciliary function in the airways and for the function of the cilia that produce the nodal flow essential for the determination of the left-right asymmetry. The polypeptide is Dynein axonemal light chain 1 (Rattus norvegicus (Rat)).